Reading from the N-terminus, the 382-residue chain is Pyrimidine monooxygenase RutA (382 aa).

FMN is bound by residues 68–69 (IK), asparagine 134, glutamate 143, 159–160 (RY), and serine 209.

It belongs to the NtaA/SnaA/DszA monooxygenase family. RutA subfamily.

The catalysed reaction is uracil + FMNH2 + NADH + O2 = (Z)-3-ureidoacrylate + FMN + NAD(+) + H2O + H(+). It carries out the reaction thymine + FMNH2 + NADH + O2 = (Z)-2-methylureidoacrylate + FMN + NAD(+) + H2O + H(+). Catalyzes the pyrimidine ring opening between N-3 and C-4 by an unusual flavin hydroperoxide-catalyzed mechanism, adding oxygen atoms in the process to yield ureidoacrylate peracid, that immediately reacts with FMN forming ureidoacrylate and FMN-N(5)-oxide. The FMN-N(5)-oxide reacts spontaneously with NADH to produce FMN. Requires the flavin reductase RutF to regenerate FMN in vivo. This chain is Pyrimidine monooxygenase RutA, found in Escherichia coli (strain 55989 / EAEC).